Reading from the N-terminus, the 950-residue chain is Serine/threonine-protein kinase atg1 (950 aa).

The Protein kinase domain maps to 6–311; the sequence is YTRLDEIGRG…FPDFFENGVI (306 aa). ATP is bound by residues 12–20 and K35; that span reads IGRGSFATV. The active-site Proton acceptor is D149. Disordered regions lie at residues 314–425, 443–467, 505–570, 671–690, and 926–950; these read PIPG…HATA, RQRG…LREE, QGGI…QSPT, VQTD…NPDS, and PTPS…TPPK. 3 stretches are compositionally biased toward polar residues: residues 370-389, 447-458, and 511-520; these read GLTQ…PTTT, RNTFSEGSPQTD, and GAQTGALSRR. Positions 549–565 are enriched in basic and acidic residues; sequence SRADSMHNRQSSYERRY.

Belongs to the protein kinase superfamily. Ser/Thr protein kinase family. APG1/unc-51/ULK1 subfamily. Homodimer. Forms a ternary complex with ATG13 and ATG17.

It is found in the cytoplasm. It localises to the preautophagosomal structure membrane. It carries out the reaction L-seryl-[protein] + ATP = O-phospho-L-seryl-[protein] + ADP + H(+). The enzyme catalyses L-threonyl-[protein] + ATP = O-phospho-L-threonyl-[protein] + ADP + H(+). Functionally, serine/threonine protein kinase involved in the cytoplasm to vacuole transport (Cvt) and found to be essential in autophagy, where it is required for the formation of autophagosomes. Involved in the clearance of protein aggregates which cannot be efficiently cleared by the proteasome. Required for selective autophagic degradation of the nucleus (nucleophagy) as well as for mitophagy which contributes to regulate mitochondrial quantity and quality by eliminating the mitochondria to a basal level to fulfill cellular energy requirements and preventing excess ROS production. Also involved in endoplasmic reticulum-specific autophagic process, in selective removal of ER-associated degradation (ERAD) substrates. Plays a key role in ATG9 and ATG23 cycling through the pre-autophagosomal structure and is necessary to promote ATG18 binding to ATG9 through phosphorylation of ATG9. Catalyzes phosphorylation of ATG4, decreasing the interaction between ATG4 and ATG8 and impairing deconjugation of PE-conjugated forms of ATG8. This is Serine/threonine-protein kinase atg1 from Neosartorya fischeri (strain ATCC 1020 / DSM 3700 / CBS 544.65 / FGSC A1164 / JCM 1740 / NRRL 181 / WB 181) (Aspergillus fischerianus).